A 718-amino-acid polypeptide reads, in one-letter code: Catalase-peroxidase (718 aa).

The segment at residues 98-219 is a cross-link (tryptophyl-tyrosyl-methioninium (Trp-Tyr) (with M-245)); that stretch reads WHAAGTYRMG…LAATEMGLIY (122 aa). Histidine 99 serves as the catalytic Proton acceptor. Positions 219–245 form a cross-link, tryptophyl-tyrosyl-methioninium (Tyr-Met) (with W-98); it reads YVNPEGPQASGDPRSAAPFIRATFGNM. Heme b is bound at residue histidine 260.

The protein belongs to the peroxidase family. Peroxidase/catalase subfamily. Homodimer or homotetramer. Heme b is required as a cofactor. Formation of the three residue Trp-Tyr-Met cross-link is important for the catalase, but not the peroxidase activity of the enzyme.

The catalysed reaction is H2O2 + AH2 = A + 2 H2O. It catalyses the reaction 2 H2O2 = O2 + 2 H2O. In terms of biological role, bifunctional enzyme with both catalase and broad-spectrum peroxidase activity. The sequence is that of Catalase-peroxidase from Acinetobacter baumannii (strain AB307-0294).